Reading from the N-terminus, the 342-residue chain is Methylthioribose-1-phosphate isomerase (342 aa).

Substrate-binding positions include 44 to 46 (RGA), Arg-85, and Gln-192. Asp-233 acts as the Proton donor in catalysis. 243–244 (NK) is a substrate binding site.

It belongs to the eIF-2B alpha/beta/delta subunits family. MtnA subfamily.

The catalysed reaction is 5-(methylsulfanyl)-alpha-D-ribose 1-phosphate = 5-(methylsulfanyl)-D-ribulose 1-phosphate. Its pathway is amino-acid biosynthesis; L-methionine biosynthesis via salvage pathway; L-methionine from S-methyl-5-thio-alpha-D-ribose 1-phosphate: step 1/6. In terms of biological role, catalyzes the interconversion of methylthioribose-1-phosphate (MTR-1-P) into methylthioribulose-1-phosphate (MTRu-1-P). This chain is Methylthioribose-1-phosphate isomerase, found in Caldicellulosiruptor saccharolyticus (strain ATCC 43494 / DSM 8903 / Tp8T 6331).